The following is a 380-amino-acid chain: E3 ubiquitin-protein ligase RNF13 (380 aa).

A signal peptide spans 1 to 34 (MLLSIGMLMLSATQVYTILTVQLFAFLNLLPVEA). The Lumenal segment spans residues 35 to 182 (DILAYNFENA…VPEFSLPLEY (148 aa)). Residues 65–160 (KGFLINSKPE…GESSANSLKD (96 aa)) enclose the PA domain. Asparagine 88 carries an N-linked (GlcNAc...) asparagine glycan. Residues 183-203 (YLIPFLIIVGICLILIVIFMI) traverse the membrane as a helical segment. At 204–380 (TKFVQDRHRA…ERDYNIANTV (177 aa)) the chain is on the cytoplasmic side. The RING-type; atypical zinc-finger motif lies at 240-282 (CAICLDEYEDGDKLRILPCSHAYHCKCVDPWLTKTKKTCPVCK). A disordered region spans residues 285–380 (VVPSQGDSDS…ERDYNIANTV (96 aa)). Composition is skewed to acidic residues over residues 292 to 304 (SDSD…EENE) and 339 to 356 (SDYE…AENE).

Interacts with ERN1. Autoubiquitinated.

The protein localises to the endoplasmic reticulum membrane. Its subcellular location is the late endosome membrane. It localises to the lysosome membrane. The protein resides in the nucleus inner membrane. The catalysed reaction is S-ubiquitinyl-[E2 ubiquitin-conjugating enzyme]-L-cysteine + [acceptor protein]-L-lysine = [E2 ubiquitin-conjugating enzyme]-L-cysteine + N(6)-ubiquitinyl-[acceptor protein]-L-lysine.. It participates in protein modification; protein ubiquitination. Its function is as follows. E3 ubiquitin-protein ligase that regulates cell proliferation. Involved in apoptosis regulation. Mediates ER stress-induced activation of JNK signaling pathway and apoptosis by promoting ERN1 activation and splicing of XBP1 mRNA. Also involved in protein trafficking and localization. The protein is E3 ubiquitin-protein ligase RNF13 (RNF13) of Bos taurus (Bovine).